We begin with the raw amino-acid sequence, 128 residues long: Protein Wnt-10 (128 aa).

5 disulfides stabilise this stretch: Cys3–Cys17, Cys5–Cys12, Cys74–Cys105, Cys90–Cys100, and Cys127–Cys128. Residue Ser9 is the site of O-palmitoleoyl serine; by PORCN attachment. N-linked (GlcNAc...) asparagine glycosylation occurs at Asn91.

Belongs to the Wnt family. In terms of processing, palmitoleoylation is required for efficient binding to frizzled receptors. Depalmitoleoylation leads to Wnt signaling pathway inhibition. In terms of tissue distribution, in embryo, in dorsal hindbrain; in adults, in brain.

The protein localises to the secreted. It localises to the extracellular space. Its subcellular location is the extracellular matrix. Functionally, ligand for members of the frizzled family of seven transmembrane receptors. Probable developmental protein. May be a signaling molecule which affects the development of discrete regions of tissues. Is likely to signal over only few cell diameters. The chain is Protein Wnt-10 (wnt10) from Xenopus laevis (African clawed frog).